The sequence spans 540 residues: Arylsulfatase K (540 aa).

An N-terminal signal peptide occupies residues 1 to 22; that stretch reads MLLLWVSVVAASALAAPAPGAD. Positions 44 and 84 each coordinate Ca(2+). The active-site Nucleophile is the C84. At C84 the chain carries 3-oxoalanine (Cys). An N-linked (GlcNAc...) asparagine glycan is attached at N112. K132 contacts substrate. The N-linked (GlcNAc...) asparagine glycan is linked to N197. Position 255 (H255) interacts with substrate. An N-linked (GlcNAc...) asparagine glycan is attached at N266. Positions 317 and 318 each coordinate Ca(2+). N-linked (GlcNAc...) asparagine glycosylation is found at N379, N417, and N502.

The protein belongs to the sulfatase family. Requires Ca(2+) as cofactor. In terms of processing, the conversion to 3-oxoalanine (also known as C-formylglycine, FGly), of a serine or cysteine residue in prokaryotes and of a cysteine residue in eukaryotes, is critical for catalytic activity. The 75-kDa precursor undergoes proteolytic processing to yield a 23 kDa form. Post-translationally, N-glycosylated with both high mannose and complex type sugars.

Its subcellular location is the secreted. The protein localises to the lysosome. The catalysed reaction is an aryl sulfate + H2O = a phenol + sulfate + H(+). The enzyme catalyses Hydrolysis of the 2-sulfate groups of the 2-O-sulfo-D-glucuronate residues of chondroitin sulfate, heparin and heparitin sulfate.. In terms of biological role, catalyzes the hydrolysis of pseudosubstrates such as p-nitrocatechol sulfate and p-nitrophenyl sulfate. Catalyzes the hydrolysis of the 2-sulfate groups of the 2-O-sulfo-D-glucuronate residues of chondroitin sulfate, heparin and heparitin sulfate. Acts selectively on 2-sulfoglucuronate and lacks activity against 2-sulfoiduronate. The protein is Arylsulfatase K (ARSK) of Bos taurus (Bovine).